We begin with the raw amino-acid sequence, 106 residues long: Ferredoxin (106 aa).

C9 and C17 together coordinate [3Fe-4S] cluster. 4 residues coordinate [4Fe-4S] cluster: C21, C40, C43, and C46. Positions 31 to 60 constitute a 4Fe-4S ferredoxin-type domain; sequence RMLYIHPDECVDCGACEPVCPVEAIYYEDD. C50 lines the [3Fe-4S] cluster pocket. Residues 84–106 form a disordered region; that stretch reads GAAKVGKVDRDVEPVSSLPPQGE.

[4Fe-4S] cluster is required as a cofactor. The cofactor is [3Fe-4S] cluster.

In terms of biological role, ferredoxins are iron-sulfur proteins that transfer electrons in a wide variety of metabolic reactions. The sequence is that of Ferredoxin (fdxA) from Saccharopolyspora erythraea (Streptomyces erythraeus).